Consider the following 337-residue polypeptide: Anthranilate phosphoribosyltransferase (337 aa).

Residues glycine 80, 83–84 (GD), threonine 88, 90–93 (NIST), 108–116 (KHGNRAVSS), and serine 120 contribute to the 5-phospho-alpha-D-ribose 1-diphosphate site. Anthranilate is bound at residue glycine 80. Residue serine 92 participates in Mg(2+) binding. Position 111 (asparagine 111) interacts with anthranilate. Anthranilate is bound at residue arginine 166. 2 residues coordinate Mg(2+): aspartate 224 and glutamate 225.

The protein belongs to the anthranilate phosphoribosyltransferase family. Homodimer. Mg(2+) serves as cofactor.

The catalysed reaction is N-(5-phospho-beta-D-ribosyl)anthranilate + diphosphate = 5-phospho-alpha-D-ribose 1-diphosphate + anthranilate. It functions in the pathway amino-acid biosynthesis; L-tryptophan biosynthesis; L-tryptophan from chorismate: step 2/5. In terms of biological role, catalyzes the transfer of the phosphoribosyl group of 5-phosphorylribose-1-pyrophosphate (PRPP) to anthranilate to yield N-(5'-phosphoribosyl)-anthranilate (PRA). The protein is Anthranilate phosphoribosyltransferase of Anaeromyxobacter dehalogenans (strain 2CP-1 / ATCC BAA-258).